A 540-amino-acid polypeptide reads, in one-letter code: Gamma-cadinene synthase (540 aa).

Mg(2+)-binding residues include D292, D296, D436, S440, and E444. The DDXXD motif signature appears at 292–296 (DDTYD).

This sequence belongs to the terpene synthase family. Mg(2+) is required as a cofactor. The cofactor is Mn(2+).

The enzyme catalyses (2E,6E)-farnesyl diphosphate = (+)-gamma-cadinene + diphosphate. Its pathway is secondary metabolite biosynthesis; terpenoid biosynthesis. Sesquiterpene synthase that catalyzes the cyclization of trans,trans-farnesyl diphosphate (FPP) to gamma cadinene. The chain is Gamma-cadinene synthase (CDS) from Ocimum basilicum (Sweet basil).